Reading from the N-terminus, the 971-residue chain is MTEPGRYKKTVNLPKTKFDMRANAVKREPELQKFWADHQIYENLSQNNPGDVFVLHDGPPYANGDLHIGHALNKILKDTINKFQLLQGRKVRYVPGWDCHGLPIELKVLQNIQPENRAKLTPLKLRWKARDFALKTVEKQSKSFQRYGVWGNWENPYLTLKPEYEAAQIGVFGKMALKGYIYRGFKPVYWSPSSQTALAEAELEYPEGHTSRSIYVTFKVTGLSETAQPLLDEYLPTLKVAIWTTTPWTIPGNLAVSLNPDLTYAVVKAGEDYLIVAEDLVETLTETLESSFKVIKTLPGKALENSTYQHPLFEREGPLVLGDYVTTESGTGLVHTAPGHGQEDYQVGQQYGLAMLSPVDGDGTFTDEAGPFAGLNVLNGGNEAVIEALQSAGALLKEESYAHKYPYDWRTKKPVILRATEQWFASVDGFREAVLDAIATVNWIPAQGENRITSMVSERSDWCISRQRNWGVPIPVFYNDATGEPLLNEATVNHIQGIVAEKGSDAWWELDNDELLPEPYRSDGNTYRKGTDTMDVWFDSGSSWAAVCDQREPLKYPAEMYLEGSDQHRGWFQSSILTSVATNGHAPYKTVLTHGFVLDEQGRKMSKSIGNVVDPAIVIAGGKNQKQDPPYGADVLRLWVSSVDYASDVPLGKNILKQMADVYRKIRNTSRFLLGNLHDFDPAQDAVAYEDLPQLDRYMLHRITEVFTDVTEAFESFQFFRFFQTVQNFCVVDLSNFYLDIAKDRLYISEPNAQRRRSCQTVLAIALENLARAIAPVLSHMAEDIWQSLPYETEHQSVFASGWMRLEDQWHNPDLASHWIVLREIRQEVNKVLEQARTEKEIGSSLEAKVLLYVSDTDLRQQLDAMNPSTGGGSNNVDELRYLFLASQVELLETPKNLDRLMYQFQSETLGVGVVTADGKKCDRCWNYSTYVGRSKQHPLLCDRCEPIIENLVTQGQISLTEEGRYQPNTK.

The 'HIGH' region signature appears at 60–70 (PYANGDLHIGH). Glutamate 563 provides a ligand contact to L-isoleucyl-5'-AMP. The short motif at 604-608 (KMSKS) is the 'KMSKS' region element. Residue lysine 607 participates in ATP binding. Residues cysteine 922, cysteine 925, cysteine 942, and cysteine 945 each coordinate Zn(2+).

It belongs to the class-I aminoacyl-tRNA synthetase family. IleS type 1 subfamily. As to quaternary structure, monomer. It depends on Zn(2+) as a cofactor.

Its subcellular location is the cytoplasm. It carries out the reaction tRNA(Ile) + L-isoleucine + ATP = L-isoleucyl-tRNA(Ile) + AMP + diphosphate. Its function is as follows. Catalyzes the attachment of isoleucine to tRNA(Ile). As IleRS can inadvertently accommodate and process structurally similar amino acids such as valine, to avoid such errors it has two additional distinct tRNA(Ile)-dependent editing activities. One activity is designated as 'pretransfer' editing and involves the hydrolysis of activated Val-AMP. The other activity is designated 'posttransfer' editing and involves deacylation of mischarged Val-tRNA(Ile). In Acaryochloris marina (strain MBIC 11017), this protein is Isoleucine--tRNA ligase.